The following is a 118-amino-acid chain: Ribonuclease P protein component (118 aa).

This sequence belongs to the RnpA family. In terms of assembly, consists of a catalytic RNA component (M1 or rnpB) and a protein subunit.

The enzyme catalyses Endonucleolytic cleavage of RNA, removing 5'-extranucleotides from tRNA precursor.. In terms of biological role, RNaseP catalyzes the removal of the 5'-leader sequence from pre-tRNA to produce the mature 5'-terminus. It can also cleave other RNA substrates such as 4.5S RNA. The protein component plays an auxiliary but essential role in vivo by binding to the 5'-leader sequence and broadening the substrate specificity of the ribozyme. This is Ribonuclease P protein component from Shewanella baltica (strain OS155 / ATCC BAA-1091).